The sequence spans 452 residues: Bifunctional protein GlmU (452 aa).

The segment at 1–232 is pyrophosphorylase; that stretch reads MTTNAPGAVI…EADMQGVNSR (232 aa). UDP-N-acetyl-alpha-D-glucosamine is bound by residues 11–14, K25, Q78, and 83–84; these read LAAG and GT. D108 is a Mg(2+) binding site. The UDP-N-acetyl-alpha-D-glucosamine site is built by G144, E158, and N230. N230 is a binding site for Mg(2+). Positions 233–253 are linker; that stretch reads ADLAAAEATMQQRLRMAAMAG. The segment at 254 to 452 is N-acetyltransferase; it reads GVTMLDPSSV…HKDKKKASGE (199 aa). 2 residues coordinate UDP-N-acetyl-alpha-D-glucosamine: R319 and K337. H349 (proton acceptor) is an active-site residue. Positions 352 and 363 each coordinate UDP-N-acetyl-alpha-D-glucosamine. Acetyl-CoA-binding positions include A366, 372 to 373, S391, S409, and R426; that span reads NY.

It in the N-terminal section; belongs to the N-acetylglucosamine-1-phosphate uridyltransferase family. This sequence in the C-terminal section; belongs to the transferase hexapeptide repeat family. Homotrimer. Mg(2+) is required as a cofactor.

The protein localises to the cytoplasm. The enzyme catalyses alpha-D-glucosamine 1-phosphate + acetyl-CoA = N-acetyl-alpha-D-glucosamine 1-phosphate + CoA + H(+). It catalyses the reaction N-acetyl-alpha-D-glucosamine 1-phosphate + UTP + H(+) = UDP-N-acetyl-alpha-D-glucosamine + diphosphate. It participates in nucleotide-sugar biosynthesis; UDP-N-acetyl-alpha-D-glucosamine biosynthesis; N-acetyl-alpha-D-glucosamine 1-phosphate from alpha-D-glucosamine 6-phosphate (route II): step 2/2. Its pathway is nucleotide-sugar biosynthesis; UDP-N-acetyl-alpha-D-glucosamine biosynthesis; UDP-N-acetyl-alpha-D-glucosamine from N-acetyl-alpha-D-glucosamine 1-phosphate: step 1/1. It functions in the pathway bacterial outer membrane biogenesis; LPS lipid A biosynthesis. Catalyzes the last two sequential reactions in the de novo biosynthetic pathway for UDP-N-acetylglucosamine (UDP-GlcNAc). The C-terminal domain catalyzes the transfer of acetyl group from acetyl coenzyme A to glucosamine-1-phosphate (GlcN-1-P) to produce N-acetylglucosamine-1-phosphate (GlcNAc-1-P), which is converted into UDP-GlcNAc by the transfer of uridine 5-monophosphate (from uridine 5-triphosphate), a reaction catalyzed by the N-terminal domain. The protein is Bifunctional protein GlmU of Parvibaculum lavamentivorans (strain DS-1 / DSM 13023 / NCIMB 13966).